Reading from the N-terminus, the 274-residue chain is 3-methyl-2-oxobutanoate hydroxymethyltransferase (274 aa).

Mg(2+)-binding residues include D49 and D88. 3-methyl-2-oxobutanoate is bound by residues 49-50, D88, and K118; that span reads DS. E120 is a binding site for Mg(2+). Residue E187 is the Proton acceptor of the active site.

Belongs to the PanB family. As to quaternary structure, homodecamer; pentamer of dimers. The cofactor is Mg(2+).

The protein localises to the cytoplasm. The enzyme catalyses 3-methyl-2-oxobutanoate + (6R)-5,10-methylene-5,6,7,8-tetrahydrofolate + H2O = 2-dehydropantoate + (6S)-5,6,7,8-tetrahydrofolate. It participates in cofactor biosynthesis; (R)-pantothenate biosynthesis; (R)-pantoate from 3-methyl-2-oxobutanoate: step 1/2. Its function is as follows. Catalyzes the reversible reaction in which hydroxymethyl group from 5,10-methylenetetrahydrofolate is transferred onto alpha-ketoisovalerate to form ketopantoate. The sequence is that of 3-methyl-2-oxobutanoate hydroxymethyltransferase from Parvibaculum lavamentivorans (strain DS-1 / DSM 13023 / NCIMB 13966).